Here is a 225-residue protein sequence, read N- to C-terminus: Biosynthetic peptidoglycan transglycosylase (225 aa).

A helical membrane pass occupies residues 8–28 (VLLIFIGAILLIQLWIFSSLV).

It belongs to the glycosyltransferase 51 family.

The protein localises to the cell inner membrane. The enzyme catalyses [GlcNAc-(1-&gt;4)-Mur2Ac(oyl-L-Ala-gamma-D-Glu-L-Lys-D-Ala-D-Ala)](n)-di-trans,octa-cis-undecaprenyl diphosphate + beta-D-GlcNAc-(1-&gt;4)-Mur2Ac(oyl-L-Ala-gamma-D-Glu-L-Lys-D-Ala-D-Ala)-di-trans,octa-cis-undecaprenyl diphosphate = [GlcNAc-(1-&gt;4)-Mur2Ac(oyl-L-Ala-gamma-D-Glu-L-Lys-D-Ala-D-Ala)](n+1)-di-trans,octa-cis-undecaprenyl diphosphate + di-trans,octa-cis-undecaprenyl diphosphate + H(+). It functions in the pathway cell wall biogenesis; peptidoglycan biosynthesis. Functionally, peptidoglycan polymerase that catalyzes glycan chain elongation from lipid-linked precursors. In Acinetobacter baumannii (strain ACICU), this protein is Biosynthetic peptidoglycan transglycosylase.